The sequence spans 358 residues: 3-dehydroquinate synthase (358 aa).

Residues 70–75 (DGEAHK), 104–108 (GVIGD), 128–129 (TT), lysine 141, and lysine 150 each bind NAD(+). Residues glutamate 183, histidine 246, and histidine 263 each coordinate Zn(2+).

Belongs to the sugar phosphate cyclases superfamily. Dehydroquinate synthase family. Requires NAD(+) as cofactor. It depends on Co(2+) as a cofactor. The cofactor is Zn(2+).

It localises to the cytoplasm. It carries out the reaction 7-phospho-2-dehydro-3-deoxy-D-arabino-heptonate = 3-dehydroquinate + phosphate. It functions in the pathway metabolic intermediate biosynthesis; chorismate biosynthesis; chorismate from D-erythrose 4-phosphate and phosphoenolpyruvate: step 2/7. Its function is as follows. Catalyzes the conversion of 3-deoxy-D-arabino-heptulosonate 7-phosphate (DAHP) to dehydroquinate (DHQ). In Bordetella bronchiseptica (strain ATCC BAA-588 / NCTC 13252 / RB50) (Alcaligenes bronchisepticus), this protein is 3-dehydroquinate synthase.